Reading from the N-terminus, the 155-residue chain is Small ribosomal subunit protein uS7 (155 aa).

It belongs to the universal ribosomal protein uS7 family. Part of the 30S ribosomal subunit. Contacts proteins S9 and S11.

In terms of biological role, one of the primary rRNA binding proteins, it binds directly to 16S rRNA where it nucleates assembly of the head domain of the 30S subunit. Is located at the subunit interface close to the decoding center, probably blocks exit of the E-site tRNA. This Mycoplasma genitalium (strain ATCC 33530 / DSM 19775 / NCTC 10195 / G37) (Mycoplasmoides genitalium) protein is Small ribosomal subunit protein uS7.